A 664-amino-acid chain; its full sequence is Exoribonuclease 2 (664 aa).

The 329-residue stretch at 193 to 521 (RIDMTHIPFV…INHRMLKALI (329 aa)) folds into the RNB domain. The S1 motif domain maps to 568 to 650 (QTLFTGEIFD…ENRSLVAKPT (83 aa)).

Belongs to the RNR ribonuclease family. RNase II subfamily.

The protein resides in the cytoplasm. It catalyses the reaction Exonucleolytic cleavage in the 3'- to 5'-direction to yield nucleoside 5'-phosphates.. Its function is as follows. Involved in mRNA degradation. Hydrolyzes single-stranded polyribonucleotides processively in the 3' to 5' direction. In Vibrio vulnificus (strain CMCP6), this protein is Exoribonuclease 2.